Here is a 178-residue protein sequence, read N- to C-terminus: Protein GrpE (178 aa).

This sequence belongs to the GrpE family. Homodimer.

It localises to the cytoplasm. Participates actively in the response to hyperosmotic and heat shock by preventing the aggregation of stress-denatured proteins, in association with DnaK and GrpE. It is the nucleotide exchange factor for DnaK and may function as a thermosensor. Unfolded proteins bind initially to DnaJ; upon interaction with the DnaJ-bound protein, DnaK hydrolyzes its bound ATP, resulting in the formation of a stable complex. GrpE releases ADP from DnaK; ATP binding to DnaK triggers the release of the substrate protein, thus completing the reaction cycle. Several rounds of ATP-dependent interactions between DnaJ, DnaK and GrpE are required for fully efficient folding. This Rickettsia prowazekii (strain Madrid E) protein is Protein GrpE.